Reading from the N-terminus, the 797-residue chain is Leucine-rich repeat-containing protein AAC1 (797 aa).

Residues 1 to 12 show a composition bias toward basic and acidic residues; that stretch reads MKRTSNRNEEAT. Disordered stretches follow at residues 1 to 20, 51 to 103, 125 to 148, and 307 to 333; these read MKRT…SSTT, YSLF…TTTT, NLPT…TTTT, and HSTS…TITA. Residues 55–81 are compositionally biased toward polar residues; that stretch reads NEPNNDNDTNSSTRPNKQQKLLKSNES. Over residues 82 to 103 the composition is skewed to low complexity; that stretch reads TTSTTTTTTPITTTTTTTTTTT. Over residues 313 to 326 the composition is skewed to pro residues; sequence SSPPPPPPPPPPQI. LRR repeat units lie at residues 376-397, 406-425, 435-456, 464-484, 492-513, 514-535, 543-564, 572-593, 601-622, and 633-653; these read KLKK…DFFS, TLET…QLLS, VLKR…YLNK, QLET…IMMK, SLKE…DFGK, SITS…KGLS, SITS…KSLS, TLKF…DHLV, SIHS…TLSQ, and PFKY…KKLI.

The protein is Leucine-rich repeat-containing protein AAC1 (AAC1) of Dictyostelium discoideum (Social amoeba).